A 317-amino-acid polypeptide reads, in one-letter code: Zinc finger protein CRM3 (317 aa).

Residues 1-15 are compositionally biased toward low complexity; it reads MNFSLSKQSSEKQSS. The tract at residues 1 to 22 is disordered; sequence MNFSLSKQSSEKQSSYTDKSRS. 2 consecutive C2H2-type zinc fingers follow at residues 254–276 and 282–306; these read KQCP…YLIH and FKCT…LKSH.

It is found in the nucleus. Its function is as follows. Probable transcription factor involved in the regulation of the transcription of genes involved in cell rescue and defense, as well as cell cycle and DNA processing. In Saccharomyces cerevisiae (strain ATCC 204508 / S288c) (Baker's yeast), this protein is Zinc finger protein CRM3.